A 570-amino-acid polypeptide reads, in one-letter code: Methionine--tRNA ligase (570 aa).

Positions 11–21 (PYVQTVPHLGN) match the 'HIGH' region motif. Zn(2+) is bound by residues cysteine 143, cysteine 146, cysteine 156, and cysteine 159. Residues 333–337 (KFSKS) carry the 'KMSKS' region motif. Lysine 336 serves as a coordination point for ATP.

This sequence belongs to the class-I aminoacyl-tRNA synthetase family. MetG type 1 subfamily. Zn(2+) serves as cofactor.

Its subcellular location is the cytoplasm. The catalysed reaction is tRNA(Met) + L-methionine + ATP = L-methionyl-tRNA(Met) + AMP + diphosphate. Is required not only for elongation of protein synthesis but also for the initiation of all mRNA translation through initiator tRNA(fMet) aminoacylation. This chain is Methionine--tRNA ligase, found in Pyrobaculum aerophilum (strain ATCC 51768 / DSM 7523 / JCM 9630 / CIP 104966 / NBRC 100827 / IM2).